The sequence spans 436 residues: Trigger factor (436 aa).

Positions 161–246 (EDQLNIDFVG…VNTVSEPKLP (86 aa)) constitute a PPIase FKBP-type domain.

This sequence belongs to the FKBP-type PPIase family. Tig subfamily.

It localises to the cytoplasm. The catalysed reaction is [protein]-peptidylproline (omega=180) = [protein]-peptidylproline (omega=0). Its function is as follows. Involved in protein export. Acts as a chaperone by maintaining the newly synthesized protein in an open conformation. Functions as a peptidyl-prolyl cis-trans isomerase. The chain is Trigger factor from Pseudomonas fluorescens (strain Pf0-1).